The chain runs to 438 residues: Gamma-glutamyl phosphate reductase (438 aa).

Residues 1-21 (MTAQTSSDVTDQKTDLTRESE) are disordered. The span at 10 to 21 (TDQKTDLTRESE) shows a compositional bias: basic and acidic residues.

This sequence belongs to the gamma-glutamyl phosphate reductase family.

It localises to the cytoplasm. It catalyses the reaction L-glutamate 5-semialdehyde + phosphate + NADP(+) = L-glutamyl 5-phosphate + NADPH + H(+). It participates in amino-acid biosynthesis; L-proline biosynthesis; L-glutamate 5-semialdehyde from L-glutamate: step 2/2. Functionally, catalyzes the NADPH-dependent reduction of L-glutamate 5-phosphate into L-glutamate 5-semialdehyde and phosphate. The product spontaneously undergoes cyclization to form 1-pyrroline-5-carboxylate. In Corynebacterium efficiens (strain DSM 44549 / YS-314 / AJ 12310 / JCM 11189 / NBRC 100395), this protein is Gamma-glutamyl phosphate reductase.